Here is a 437-residue protein sequence, read N- to C-terminus: MSYSFMSPPNAARFVLSNATVPAVTVVGFTGPSSEGLMKADIVVADGLIKDILPAGTAPAELAKADMRDGMVWPTFADMHTHLDKGHIWERRANPDGSFMGALDAVRSDREANWSAADVRKRMEFSLRAAYAHGTSLIRTHLDSLAPQHRISFEVFSEVREAWKDKIALQAVALFPLDFMVDDAFFADLTTVVREAGGLLGGVTQMNPDIDAQLDKLIRAAAANGLDIDLHVDETEDREVLTLKAIAAAVLRNGFTGKVTAGHCCSLARQDENVAAATIDLVAKAGISIVALPMCNMYLQDRHPGRTPRWRGVTLLHELAAAGVPTAVASDNTRDPFYAYGDLDPVEVFREAVRILHLDHPLDTAARVVTTSPASILGRPDIGRIAVGGPADLVLFSARRWSEFLSRPQSDRVVLRKGKVIDRSLPDYRELDTVIGA.

His-80 and His-82 together coordinate a divalent metal cation. Lys-85 serves as a coordination point for substrate. His-231 provides a ligand contact to a divalent metal cation. Residue Glu-234 is the Proton donor of the active site. A divalent metal cation is bound at residue Asp-331. Residue 331–332 coordinates substrate; the sequence is DN.

It belongs to the metallo-dependent hydrolases superfamily. Pterin deaminase family. A divalent metal cation is required as a cofactor.

The catalysed reaction is a 2-amino-4-hydroxypteridine + H2O + H(+) = a 2,4-dihydroxypteridine + NH4(+). It catalyses the reaction L-sepiapterin + H2O + H(+) = (S)-xanthopterin-B2 + NH4(+). In terms of biological role, catalyzes the deamination of many pterin metabolites, such as formylpterin, pterin-6-carboxylate, pterin-7-carboxylate, pterin, hydroxymethylpterin, biopterin, D-(+)-neopterin, isoxanthopterin, sepiapterin, folate, xanthopterin, and 7,8-dihydrohydroxymethylpterin. May be involved in a degradative pathway for catabolizing pterin rings. The protein is Pterin deaminase of Rhizobium rhizogenes (strain K84 / ATCC BAA-868) (Agrobacterium radiobacter).